The sequence spans 810 residues: MAPAAGPRTGKHAKPPRSKTLKRKRGQDELSSLIQRVEDLDLKETFKSFSDLPLSEPTASGLASSHYKTLTDIQSRAISHALKGRDVLGAAKTGSGKTLAFLVPVLENLYRKQWAEHDGLGALILSPTRELAIQIFEVLRKIGRYHTFSAGLVIGGKSLKEEQERLGRMNILVCTPGRMLQHLDQTALFDTYNLQMLVLDEADRILDLGFQQTVDAIIGHLPKERQTLLFSATQTKKVSDLARLSLQDPEYVAVHETASSATPSKLQQHYVITPLPQKLDILWSFIRSNLKSKTMVFLSSGKQVRFVYESFRHLQPGIPLMHLHGRQKQGGRLDIVTRFSQSKHCVLFSTDVAARGLDFPAVDWVIQLDCPEDADTYIHRVGRTARYEREGRAVLFLDPSEEEGMLKRLEQKKVPIEKINIKANKQQSIKDQLQNMCFKDPELKYLGQKAFISYVKSVYIQKDKEIFKLKELKLDEFAASLGLPGAPRIKFIKGDDTKQRKNAPRAAAHLLSDDDDSDEEDGEKKSKKKEEPQVRTKYDRMFERRNQDVLAEHYSKLINDDGTMVAPNAGAGADADEDDDFLSVKRRFDAGDKDLGSSSDEDDESEKGDKKDVKVVHIDGSTPLVIDSKRREKLLKSKKKLLKFKGKGTKLVYDDEGNPHELYELEDEEQFKARGDAKDQQAKFLAEEVERTRMADMEDKEIAKQKRREKKEKRKARERELLAEAEEEETLVQLPPYEGDQDVDGGFSASEDEAPRPSKKPKVKFTEANDREEAEPWYKKSKKPSDKAANAPPQVQTLEDLESLATGLLG.

The interval 1 to 28 (MAPAAGPRTGKHAKPPRSKTLKRKRGQD) is disordered. Positions 9 to 25 (TGKHAKPPRSKTLKRKR) are enriched in basic residues. The Q motif motif lies at 47–75 (KSFSDLPLSEPTASGLASSHYKTLTDIQS). Positions 78 to 252 (ISHALKGRDV…RLSLQDPEYV (175 aa)) constitute a Helicase ATP-binding domain. 91–98 (AKTGSGKT) serves as a coordination point for ATP. The DEAD box signature appears at 200-203 (DEAD). Residues 278-437 (KLDILWSFIR…SIKDQLQNMC (160 aa)) enclose the Helicase C-terminal domain. Disordered regions lie at residues 494–542 (GDDT…DRMF), 590–615 (AGDK…DVKV), and 690–810 (ERTR…GLLG). Residues 522–542 (GEKKSKKKEEPQVRTKYDRMF) are compositionally biased toward basic and acidic residues. Residues 690 to 704 (ERTRMADMEDKEIAK) show a composition bias toward basic and acidic residues. Over residues 705–714 (QKRREKKEKR) the composition is skewed to basic residues. The span at 764–786 (KFTEANDREEAEPWYKKSKKPSD) shows a compositional bias: basic and acidic residues.

Belongs to the DEAD box helicase family. DDX10/DBP4 subfamily. As to quaternary structure, interacts with the U3 and U14 snoRNAs. Associates with pre-ribosomal complexes.

Its subcellular location is the nucleus. The protein resides in the nucleolus. It catalyses the reaction ATP + H2O = ADP + phosphate + H(+). In terms of biological role, ATP-dependent RNA helicase required for ribosome biogenesis. Involved in the release of U14 snoRNA in pre-ribosomal complexes. Required for pre-rRNA cleavage at site A2. The polypeptide is ATP-dependent RNA helicase dbp4 (dbp4) (Neosartorya fischeri (strain ATCC 1020 / DSM 3700 / CBS 544.65 / FGSC A1164 / JCM 1740 / NRRL 181 / WB 181) (Aspergillus fischerianus)).